The following is a 269-amino-acid chain: 5'-nucleotidase SurE (269 aa).

Asp-11, Asp-12, Ser-43, and Asn-101 together coordinate a divalent metal cation.

It belongs to the SurE nucleotidase family. A divalent metal cation serves as cofactor.

Its subcellular location is the cytoplasm. The catalysed reaction is a ribonucleoside 5'-phosphate + H2O = a ribonucleoside + phosphate. In terms of biological role, nucleotidase that shows phosphatase activity on nucleoside 5'-monophosphates. In Synechococcus sp. (strain WH7803), this protein is 5'-nucleotidase SurE.